A 365-amino-acid polypeptide reads, in one-letter code: MISLIIGIMVSLVVTIVGTPLLIKLVHKLNYGQYIRQDGPKSHLVKRGTPTLGGVVINLAVVLGWCSSALYRFLTRGEVPSWSAVLVLFAMLSMGFLGFIDDFAKVRKKQSEGLTVKGKFIGQFILATIYAVLALILPTKSGFPSAQAGMSFIEKPFFSFEFAGRVVAIVLFVIWVNFLMTAWTNAINLTDGLDGLAAGSSMIAFIGYAIIAFWEFYHLKGSDHPGFTYAVSDPLDLTIIAACAAVACFGFLWYNSNPASIFMGDTGSLALGGLFAAMSIATHTEFLAIILGGLFVIETMSDIIQVGYFKMTHKRVFKMAPIHHHFELKGWPEVKVVVRFWMIEMLFVLIALVLFYGDWVARSGL.

Helical transmembrane passes span 2-22 (ISLI…TPLL), 51-71 (TLGG…SALY), 80-100 (PSWS…LGFI), 118-138 (GKFI…LILP), 167-187 (VAIV…TNAI), 196-216 (LAAG…FWEF), 234-254 (PLDL…FLWY), 256-276 (SNPA…GLFA), 277-297 (AMSI…LFVI), and 340-360 (FWMI…GDWV).

This sequence belongs to the glycosyltransferase 4 family. MraY subfamily. Mg(2+) is required as a cofactor.

It is found in the cell membrane. The catalysed reaction is UDP-N-acetyl-alpha-D-muramoyl-L-alanyl-gamma-D-glutamyl-meso-2,6-diaminopimeloyl-D-alanyl-D-alanine + di-trans,octa-cis-undecaprenyl phosphate = di-trans,octa-cis-undecaprenyl diphospho-N-acetyl-alpha-D-muramoyl-L-alanyl-D-glutamyl-meso-2,6-diaminopimeloyl-D-alanyl-D-alanine + UMP. The protein operates within cell wall biogenesis; peptidoglycan biosynthesis. Catalyzes the initial step of the lipid cycle reactions in the biosynthesis of the cell wall peptidoglycan: transfers peptidoglycan precursor phospho-MurNAc-pentapeptide from UDP-MurNAc-pentapeptide onto the lipid carrier undecaprenyl phosphate, yielding undecaprenyl-pyrophosphoryl-MurNAc-pentapeptide, known as lipid I. This Bifidobacterium adolescentis (strain ATCC 15703 / DSM 20083 / NCTC 11814 / E194a) protein is Phospho-N-acetylmuramoyl-pentapeptide-transferase.